Here is a 192-residue protein sequence, read N- to C-terminus: Putative cyclic ADP-D-ribose synthase ThsB1 (192 aa).

Belongs to the Thoeris B TIR-like family. Monomer; not seen to interact with ThsA.

It localises to the cytoplasm. Activated upon phage infection. TIR-like domain-containing component of the Thoeris antiviral defense system, composed of ThsA and ThsB. Expression of ThsA and ThsB in B.subtilis (strain BEST7003) confers resistance to phages SBSphiC, SBSphiJ and SPO1. Phage infection activates this protein so that 30 to 45 minutes post-infection with phage SPO1 it generates a signal molecule that in turn activates the NAD(+) hydrolase activity of ThsA. The signal is similar to cyclic ADP-D-ribose, but how it differs is unknown. In vitro purified (but unactivated) ThsB has no NAD(+) hydrolyzing activity, no activity on AMP, CMP, GMP or UMP, does not alter the activity of ThsA, does not bind DNA. Hydrolyzes NAD(+) to make a cyclic ADP-D-ribose (cADPR) signaling molecule; might make 3'cADPR. The polypeptide is Putative cyclic ADP-D-ribose synthase ThsB1 (Bacillus cereus (strain MSX-D12)).